The sequence spans 682 residues: DNA ligase (682 aa).

NAD(+)-binding positions include 42-46, 91-92, and E124; these read DAEYD and SL. K126 serves as the catalytic N6-AMP-lysine intermediate. Residues R147, E184, K302, and K326 each coordinate NAD(+). Zn(2+) contacts are provided by C420, C423, C438, and C444. A BRCT domain is found at 603-682; that stretch reads IADNPLKGKS…QEFIALTGEN (80 aa).

It belongs to the NAD-dependent DNA ligase family. LigA subfamily. Requires Mg(2+) as cofactor. Mn(2+) serves as cofactor.

It carries out the reaction NAD(+) + (deoxyribonucleotide)n-3'-hydroxyl + 5'-phospho-(deoxyribonucleotide)m = (deoxyribonucleotide)n+m + AMP + beta-nicotinamide D-nucleotide.. In terms of biological role, DNA ligase that catalyzes the formation of phosphodiester linkages between 5'-phosphoryl and 3'-hydroxyl groups in double-stranded DNA using NAD as a coenzyme and as the energy source for the reaction. It is essential for DNA replication and repair of damaged DNA. This chain is DNA ligase, found in Actinobacillus pleuropneumoniae serotype 3 (strain JL03).